The primary structure comprises 259 residues: 3-methyl-2-oxobutanoate hydroxymethyltransferase (259 aa).

Mg(2+) is bound by residues aspartate 44 and aspartate 83. Residues 44–45, aspartate 83, and lysine 113 each bind 3-methyl-2-oxobutanoate; that span reads DS. Glutamate 115 contacts Mg(2+). Glutamate 183 functions as the Proton acceptor in the catalytic mechanism.

Belongs to the PanB family. As to quaternary structure, homodecamer; pentamer of dimers. Mg(2+) serves as cofactor.

It is found in the cytoplasm. It catalyses the reaction 3-methyl-2-oxobutanoate + (6R)-5,10-methylene-5,6,7,8-tetrahydrofolate + H2O = 2-dehydropantoate + (6S)-5,6,7,8-tetrahydrofolate. Its pathway is cofactor biosynthesis; (R)-pantothenate biosynthesis; (R)-pantoate from 3-methyl-2-oxobutanoate: step 1/2. Its function is as follows. Catalyzes the reversible reaction in which hydroxymethyl group from 5,10-methylenetetrahydrofolate is transferred onto alpha-ketoisovalerate to form ketopantoate. The polypeptide is 3-methyl-2-oxobutanoate hydroxymethyltransferase (Acaryochloris marina (strain MBIC 11017)).